Reading from the N-terminus, the 148-residue chain is Glutamyl-tRNA(Gln) amidotransferase subunit C, mitochondrial (148 aa).

The protein belongs to the GatC family. In terms of assembly, subunit of the heterotrimeric GatCAB amidotransferase (AdT) complex, composed of A, B and C subunits.

Its subcellular location is the mitochondrion. The catalysed reaction is L-glutamyl-tRNA(Gln) + L-glutamine + ATP + H2O = L-glutaminyl-tRNA(Gln) + L-glutamate + ADP + phosphate + H(+). In terms of biological role, allows the formation of correctly charged Gln-tRNA(Gln) through the transamidation of misacylated Glu-tRNA(Gln) in the mitochondria. The reaction takes place in the presence of glutamine and ATP through an activated gamma-phospho-Glu-tRNA(Gln). The protein is Glutamyl-tRNA(Gln) amidotransferase subunit C, mitochondrial of Drosophila yakuba (Fruit fly).